Here is a 541-residue protein sequence, read N- to C-terminus: Probable inorganic phosphate transporter 1-8 (541 aa).

The Cytoplasmic segment spans residues 1–28 (MARQEQQQHLQVLSALDAAKTQWYHFTA). Residues 29-49 (IVVAGMGFFTDAYDLFCISLV) traverse the membrane as a helical segment. The Extracellular portion of the chain corresponds to 50–74 (TKLLGRIYYTDLAKENPGSLPPNVA). The helical transmembrane segment at 75-95 (AAVNGVAFCGTLAGQLFFGWL) threads the bilayer. The Cytoplasmic segment spans residues 96–102 (GDKLGRK). The helical transmembrane segment at 103 to 123 (SVYGMTLLMMVICSIASGLSF) threads the bilayer. Residues 124–126 (SHT) lie on the Extracellular side of the membrane. Residues 127–147 (PTSVMATLCFFRFWLGFGIGG) form a helical membrane-spanning segment. The Cytoplasmic portion of the chain corresponds to 148 to 168 (DYPLSATIMSEYANKKTRGAF). The helical transmembrane segment at 169-189 (IAAVFAMQGFGILAGGIVTLI) threads the bilayer. The Extracellular portion of the chain corresponds to 190-215 (ISSAFRAGFPAPAYQDDRAGSTVRQA). Residues 216–236 (DYVWRIILMLGAMPALLTYYW) traverse the membrane as a helical segment. Over 237–297 (RMKMPETARY…GLFSRQFARR (61 aa)) the chain is Cytoplasmic. The chain crosses the membrane as a helical span at residues 298-318 (HGLHLVGTATTWFLLDIAFYS). Topologically, residues 319-353 (QNLFQKDIFTSINWIPKAKTMSALEEVFRIARAQT) are extracellular. Residues 354–374 (LIALCGTVPGYWFTVFLIDIV) traverse the membrane as a helical segment. Residues 375 to 376 (GR) are Cytoplasmic-facing. The chain crosses the membrane as a helical span at residues 377–397 (FAIQLLGFFMMTVFMLGLAVP). Residues 398–404 (YHHWTTK) are Extracellular-facing. The chain crosses the membrane as a helical span at residues 405-425 (GNHIGFVVMYAFTFFFANFGP). The Cytoplasmic portion of the chain corresponds to 426–447 (NSTTFIVPAEIFPARLRSTCHG). Residues 448–468 (ISAAAGKAGAIIGSFGFLYAA) traverse the membrane as a helical segment. Topologically, residues 469–486 (QDPHKPDAGYKPGIGVRN) are extracellular. The chain crosses the membrane as a helical span at residues 487 to 507 (SLFVLAGCNLLGFICTFLVPE). Residues 508-541 (SKGKSLEEMSGEAEDDDDEVAAAGGGAAVRPQTA) lie on the Cytoplasmic side of the membrane. Residues 514 to 541 (EEMSGEAEDDDDEVAAAGGGAAVRPQTA) form a disordered region. The segment covering 516–527 (MSGEAEDDDDEV) has biased composition (acidic residues).

The protein belongs to the major facilitator superfamily. Phosphate:H(+) symporter (TC 2.A.1.9) family.

Its subcellular location is the membrane. Its function is as follows. High-affinity transporter for external inorganic phosphate. The chain is Probable inorganic phosphate transporter 1-8 (PHT1-8) from Oryza sativa subsp. japonica (Rice).